The sequence spans 129 residues: Fluoride-specific ion channel FluC 2 (129 aa).

The chain crosses the membrane as a helical span at residues 19 to 39; the sequence is GLGLVVPAAAVGGFPLGTLFI. Na(+)-binding residues include Gly-74 and Thr-77. The chain crosses the membrane as a helical span at residues 95–115; sequence FGMAAVYIAASLFGGLLASWA.

This sequence belongs to the fluoride channel Fluc/FEX (TC 1.A.43) family.

It is found in the cell membrane. The catalysed reaction is fluoride(in) = fluoride(out). Its activity is regulated as follows. Na(+) is not transported, but it plays an essential structural role and its presence is essential for fluoride channel function. Fluoride-specific ion channel. Important for reducing fluoride concentration in the cell, thus reducing its toxicity. This chain is Fluoride-specific ion channel FluC 2, found in Geobacillus kaustophilus (strain HTA426).